We begin with the raw amino-acid sequence, 105 residues long: Ribonuclease P protein component 4 (105 aa).

Cysteine 63, cysteine 66, cysteine 89, and cysteine 92 together coordinate Zn(2+).

The protein belongs to the eukaryotic/archaeal RNase P protein component 4 family. In terms of assembly, consists of a catalytic RNA component and at least 4-5 protein subunits. Zn(2+) is required as a cofactor.

Its subcellular location is the cytoplasm. It carries out the reaction Endonucleolytic cleavage of RNA, removing 5'-extranucleotides from tRNA precursor.. In terms of biological role, part of ribonuclease P, a protein complex that generates mature tRNA molecules by cleaving their 5'-ends. The chain is Ribonuclease P protein component 4 from Methanoculleus marisnigri (strain ATCC 35101 / DSM 1498 / JR1).